The chain runs to 294 residues: Phosphatidylglycerol--prolipoprotein diacylglyceryl transferase (294 aa).

7 helical membrane passes run 10–30 (VALA…LLAF), 55–75 (LVFY…VLFY), 91–111 (WEGG…MWFF), 119–139 (AFQV…FGRI), 196–216 (PSQL…LWWY), 224–244 (MAAS…IEFF), and 258–278 (WMTK…IMLI). A 1,2-diacyl-sn-glycero-3-phospho-(1'-sn-glycerol) is bound at residue arginine 138.

Belongs to the Lgt family.

It is found in the cell inner membrane. It catalyses the reaction L-cysteinyl-[prolipoprotein] + a 1,2-diacyl-sn-glycero-3-phospho-(1'-sn-glycerol) = an S-1,2-diacyl-sn-glyceryl-L-cysteinyl-[prolipoprotein] + sn-glycerol 1-phosphate + H(+). Its pathway is protein modification; lipoprotein biosynthesis (diacylglyceryl transfer). In terms of biological role, catalyzes the transfer of the diacylglyceryl group from phosphatidylglycerol to the sulfhydryl group of the N-terminal cysteine of a prolipoprotein, the first step in the formation of mature lipoproteins. This is Phosphatidylglycerol--prolipoprotein diacylglyceryl transferase from Psychrobacter arcticus (strain DSM 17307 / VKM B-2377 / 273-4).